We begin with the raw amino-acid sequence, 240 residues long: Small ribosomal subunit protein uS3 (240 aa).

Positions 21–92 constitute a KH type-2 domain; the sequence is LNEFFTRELA…TIVLYAERVQ (72 aa). A phosphothreonine mark is found at Thr44 and Thr70. At Ser97 the chain carries Phosphoserine. Lys106 participates in a covalent cross-link: Glycyl lysine isopeptide (Lys-Gly) (interchain with G-Cter in ubiquitin). Ser129 is subject to Phosphoserine. Glycyl lysine isopeptide (Lys-Gly) (interchain with G-Cter in ubiquitin) cross-links involve residues Lys132 and Lys141. The residue at position 146 (Arg146) is an Omega-N-methylarginine; by SFM1. Residues Lys151, Lys200, and Lys212 each participate in a glycyl lysine isopeptide (Lys-Gly) (interchain with G-Cter in ubiquitin) cross-link. The segment at 212–240 is disordered; that stretch reads KEEEPILAPSVKDYRPAEETEAQAEPVEA. Residue Ser221 is modified to Phosphoserine. Residues 230–240 show a composition bias toward acidic residues; sequence ETEAQAEPVEA. Thr231 is subject to Phosphothreonine.

This sequence belongs to the universal ribosomal protein uS3 family. In terms of assembly, component of the small ribosomal subunit (SSU). Mature yeast ribosomes consist of a small (40S) and a large (60S) subunit. The 40S small subunit contains 1 molecule of ribosomal RNA (18S rRNA) and 33 different proteins (encoded by 57 genes). The large 60S subunit contains 3 rRNA molecules (25S, 5.8S and 5S rRNA) and 46 different proteins (encoded by 81 genes). Post-translationally, ubiquitinated at Lys-212 in response to stalled ribosomes. Ubiquitination leads to activation of the No-Go Decay (NGD) pathway and degradation of non-functional 18S rRNA: first monoubiquitinated at Lys-212 by MAG2, followed by formation of 'Lys-63'-linked polyubiquitin chains on monoubiquitin by HEL2 and RSP5.

The protein resides in the cytoplasm. Functionally, component of the ribosome, a large ribonucleoprotein complex responsible for the synthesis of proteins in the cell. The small ribosomal subunit (SSU) binds messenger RNAs (mRNAs) and translates the encoded message by selecting cognate aminoacyl-transfer RNA (tRNA) molecules. The large subunit (LSU) contains the ribosomal catalytic site termed the peptidyl transferase center (PTC), which catalyzes the formation of peptide bonds, thereby polymerizing the amino acids delivered by tRNAs into a polypeptide chain. The nascent polypeptides leave the ribosome through a tunnel in the LSU and interact with protein factors that function in enzymatic processing, targeting, and the membrane insertion of nascent chains at the exit of the ribosomal tunnel. The polypeptide is Small ribosomal subunit protein uS3 (Saccharomyces cerevisiae (strain ATCC 204508 / S288c) (Baker's yeast)).